Reading from the N-terminus, the 101-residue chain is Small ribosomal subunit protein uS14 (101 aa).

It belongs to the universal ribosomal protein uS14 family. In terms of assembly, part of the 30S ribosomal subunit. Contacts proteins S3 and S10.

In terms of biological role, binds 16S rRNA, required for the assembly of 30S particles and may also be responsible for determining the conformation of the 16S rRNA at the A site. In Psychromonas ingrahamii (strain DSM 17664 / CCUG 51855 / 37), this protein is Small ribosomal subunit protein uS14.